The primary structure comprises 204 residues: MIGRLRGVVIEKQPPEVLLEVGGLGYEVQMPMSCFYDLPEIGKEVTIHTHFVVREDAQLLYGFNHKQERALFRELIKTNGVGPKLALAILSGMTATQFVLSVEREEISSLIKLPGVGKKTAERLVVEMKDRLKGWVSHDLFSPAEISLPARESVLRAPDSSEEAASALVALGYKPQQASQIVSKIAKEGMSVEDIIRESLRSLV.

The domain I stretch occupies residues 1-64 (MIGRLRGVVI…EDAQLLYGFN (64 aa)). Residues 65–143 (HKQERALFRE…GWVSHDLFSP (79 aa)) form a domain II region. Residues 144 to 155 (AEISLPARESVL) form a flexible linker region. A domain III region spans residues 156–204 (RAPDSSEEAASALVALGYKPQQASQIVSKIAKEGMSVEDIIRESLRSLV).

This sequence belongs to the RuvA family. As to quaternary structure, homotetramer. Forms an RuvA(8)-RuvB(12)-Holliday junction (HJ) complex. HJ DNA is sandwiched between 2 RuvA tetramers; dsDNA enters through RuvA and exits via RuvB. An RuvB hexamer assembles on each DNA strand where it exits the tetramer. Each RuvB hexamer is contacted by two RuvA subunits (via domain III) on 2 adjacent RuvB subunits; this complex drives branch migration. In the full resolvosome a probable DNA-RuvA(4)-RuvB(12)-RuvC(2) complex forms which resolves the HJ.

It localises to the cytoplasm. Functionally, the RuvA-RuvB-RuvC complex processes Holliday junction (HJ) DNA during genetic recombination and DNA repair, while the RuvA-RuvB complex plays an important role in the rescue of blocked DNA replication forks via replication fork reversal (RFR). RuvA specifically binds to HJ cruciform DNA, conferring on it an open structure. The RuvB hexamer acts as an ATP-dependent pump, pulling dsDNA into and through the RuvAB complex. HJ branch migration allows RuvC to scan DNA until it finds its consensus sequence, where it cleaves and resolves the cruciform DNA. The chain is Holliday junction branch migration complex subunit RuvA from Aeromonas salmonicida (strain A449).